The chain runs to 449 residues: Packaging protein 1 (449 aa).

A disordered region spans residues 1 to 78 (METRGRRPAA…PAKRGDMLDR (78 aa)). 171–178 (GPTGCGKS) lines the ATP pocket. Residues 440–449 (RAYRARKTPK) form a DNA-binding region.

It belongs to the adenoviridae packaging protein 1 family. In terms of assembly, homodimer. Part of a genome packaging complex composed of packaging proteins 1, 2 and 3; this complex specifically binds to the packaging sequence on the left end of viral genomic DNA and performs packaging of the viral genome. Interacts with protein 33K.

Its subcellular location is the virion. It localises to the host nucleus. The protein localises to the host nucleoplasm. It is found in the host nucleolus. Functionally, component of the packaging machinery which encapsidates the viral DNA into preformed capsids and transcriptional activator of the viral major late promoter (MLP). Binds, along with packaging proteins 2 and 3, to the specific packaging sequence on the left end of viral genomic DNA and displays ATPase activity thereby providing the power stroke of the packaging machinery. The activity of packaging protein IVa2 is stimulated by protein 33K which acts as a terminase. May be the protein that pumps DNA into the capsid powered by ATP hydrolysis. Specifically binds to the 5'-CG-3' nucleotides of the repeats making up the packaging sequence. Component of the DEF-A and DEF-B transcription factors that bind downstream elements of the major late promoter (MLP), and stimulate transcription from the MLP after initiation of viral DNA replication. DEF-A is a heterodimer packaging proteins 1 and 2 and DEF-B is a homodimer of packaging protein 1. This Human adenovirus C serotype 5 (HAdV-5) protein is Packaging protein 1.